We begin with the raw amino-acid sequence, 326 residues long: MALTASVKEELSRLDIKKSSVRKAEVSAMLRFAGGLHIISGRIVIEAEVDLASTARRLRAAIAEVYGHQSEIIVVSAGGLRRASRYVVRVVRDGEALARQTGLLDGRGRPVRGLPSAVVNGSAADAEAVWRGAFLAHGSLTEPGRSSSLEVTCPGPESALALVGAARRLDIQAKAREVRGVDRVVIRDGDTIAALLTRMGAHDALMVWEERRMRKEVRATANRLANFDDANLRRSAQAAVAAGARVDRALEILGDDVPDHLKYAGELRVAHKQASLDELGRLADPVMTKDAIAGRIRRLLAMADKRALDLGIPGTDANVTPEMLDE.

The H-T-H motif DNA-binding region spans 275–308; it reads SLDELGRLADPVMTKDAIAGRIRRLLAMADKRAL.

Belongs to the WhiA family.

Its function is as follows. Involved in cell division and chromosome segregation. The sequence is that of Probable cell division protein WhiA from Pseudarthrobacter chlorophenolicus (strain ATCC 700700 / DSM 12829 / CIP 107037 / JCM 12360 / KCTC 9906 / NCIMB 13794 / A6) (Arthrobacter chlorophenolicus).